The chain runs to 1522 residues: ATP-binding cassette sub-family C member 3 (1522 aa).

Residues 1-32 (MDRLCGSGELGSKFWDSNLTVYTNTPDLTPCF) are Extracellular-facing. A glycan (N-linked (GlcNAc...) asparagine) is linked at asparagine 18. Residues 33–53 (QNSLLAWVPCIYLWAALPCYL) form a helical membrane-spanning segment. Topologically, residues 54 to 73 (FYLRHHRLGYIVLSCLSRLK) are cytoplasmic. The helical transmembrane segment at 74-94 (TALGVLLWCISWVDLFYSFHG) threads the bilayer. Over 95–99 (LVHGS) the chain is Extracellular. A helical membrane pass occupies residues 100-120 (SPAPVFFITPLLVGITMLLAT). At 121-132 (LLIQYERLRGVR) the chain is on the cytoplasmic side. A helical transmembrane segment spans residues 133–153 (SSGVLIIFWLLCVICAIIPFR). At 154 to 171 (SKILLALAEGKILDPFRF) the chain is on the extracellular side. The chain crosses the membrane as a helical span at residues 172-192 (TTFYIYFALVLCAFILSCFQE). The Cytoplasmic segment spans residues 193–301 (KPPLFSPENL…KTKKPSFLRA (109 aa)). The chain crosses the membrane as a helical span at residues 302 to 322 (LVRTFTSSLLMGACFKLIQDL). Positions 310 to 592 (LLMGACFKLI…LPQLISGMTQ (283 aa)) constitute an ABC transmembrane type-1 1 domain. Residues 323–347 (SPSSTHSCSASSSGLFRPHGPYWWG) lie on the Extracellular side of the membrane. The chain crosses the membrane as a helical span at residues 348 to 368 (FLLAGLMFVSSTMQTLILHQH). The Cytoplasmic portion of the chain corresponds to 369–424 (YHCIFVMALRIRTAIIGVIYRKALTITNSVKREYTVGEMVNLMSVDAQRFMDVSPF). A helical membrane pass occupies residues 425 to 445 (INLLWSAPLQVILAIYFLWQI). The Extracellular portion of the chain corresponds to 446-448 (LGP). Residues 449–469 (SALAGVAVIVLLIPLNGAVSM) form a helical membrane-spanning segment. Residues 470-531 (KMKTYQVQQM…LLRKGAYLQA (62 aa)) are Cytoplasmic-facing. The helical transmembrane segment at 532–552 (ISTFIWVCTPFMVTLITLGVY) threads the bilayer. Residues 553-574 (VCVDKNNVLDAEKAFVSLSLFN) lie on the Extracellular side of the membrane. The helical transmembrane segment at 575–595 (ILKIPLNLLPQLISGMTQTSV) threads the bilayer. Residues 596–958 (SLKRIQDFLN…VKLSVYWDYA (363 aa)) are Cytoplasmic-facing. The region spanning 625 to 849 (ITIHNGTFSW…DGSFANFLRN (225 aa)) is the ABC transporter 1 domain. 659-666 (GPVGCGKS) is a binding site for ATP. Serine 902 and serine 905 each carry phosphoserine. A helical membrane pass occupies residues 959-979 (KSVGLCTTLFICLLYAGQNAV). Residues 966 to 1247 (TLFICLLYAG…MIRTLSDLES (282 aa)) enclose the ABC transmembrane type-1 2 domain. At 980 to 1016 (AIGANVWLSAWTNDVEEHGQQNNTSVRLGVYATLGIL) the chain is on the extracellular side. Residues asparagine 1001 and asparagine 1002 are each glycosylated (N-linked (GlcNAc...) asparagine). A helical transmembrane segment spans residues 1017 to 1037 (QGLLVMLSAFTMVVGAIQAAR). At 1038-1080 (LLHTALLHNQIRAPQSFFDTTPSGRILNRFSKDIYVIHEVLAP) the chain is on the cytoplasmic side. A helical transmembrane segment spans residues 1081-1101 (TILMLFNSFYTSISTIVVIVA). Position 1102 (serine 1102) is a topological domain, extracellular. Residues 1103–1123 (TPLFCVVVLPLAVFYGFVQRF) traverse the membrane as a helical segment. The Cytoplasmic portion of the chain corresponds to 1124–1194 (YVATSRQLKR…ASNRWLGVHV (71 aa)). A helical membrane pass occupies residues 1195–1215 (EFVGNCVVLFSALFAVIGRNS). At 1216–1217 (LN) the chain is on the extracellular side. A helical membrane pass occupies residues 1218 to 1238 (PGLVGLSVSYALQVTLSLNWM). Topologically, residues 1239–1522 (IRTLSDLESN…YGMAKDAGLA (284 aa)) are cytoplasmic. The region spanning 1286-1518 (FRNYSVRYRP…GGIFYGMAKD (233 aa)) is the ABC transporter 2 domain. ATP is bound at residue 1318 to 1325 (GRTGAGKS).

It belongs to the ABC transporter superfamily. ABCC family. Conjugate transporter (TC 3.A.1.208) subfamily. Expressed in lung, ileum, colon and liver. Higher in liver of Eisai hyperbilirubinemic rats.

It localises to the basolateral cell membrane. The protein localises to the basal cell membrane. The catalysed reaction is an S-substituted glutathione(in) + ATP + H2O = an S-substituted glutathione(out) + ADP + phosphate + H(+). It carries out the reaction ATP + H2O + xenobioticSide 1 = ADP + phosphate + xenobioticSide 2.. It catalyses the reaction taurocholate(in) + ATP + H2O = taurocholate(out) + ADP + phosphate + H(+). The enzyme catalyses glycocholate(in) + ATP + H2O = glycocholate(out) + ADP + phosphate + H(+). The catalysed reaction is taurolithocholate 3-sulfate(in) + ATP + H2O = taurolithocholate 3-sulfate(out) + ADP + phosphate + H(+). It carries out the reaction 17beta-estradiol 17-O-(beta-D-glucuronate)(in) + ATP + H2O = 17beta-estradiol 17-O-(beta-D-glucuronate)(out) + ADP + phosphate + H(+). It catalyses the reaction dehydroepiandrosterone 3-sulfate(in) + ATP + H2O = dehydroepiandrosterone 3-sulfate(out) + ADP + phosphate + H(+). The enzyme catalyses leukotriene C4(in) + ATP + H2O = leukotriene C4(out) + ADP + phosphate + H(+). The catalysed reaction is (4Z,15Z)-bilirubin IXalpha C8-beta-D-glucuronoside(in) + ATP + H2O = (4Z,15Z)-bilirubin IXalpha C8-beta-D-glucuronoside(out) + ADP + phosphate + H(+). It carries out the reaction (4Z,15Z)-bilirubin IXalpha C8,C12-beta-D-bisglucuronoside(in) + ATP + H2O = (4Z,15Z)-bilirubin IXalpha C8,C12-beta-D-bisglucuronoside(out) + ADP + phosphate + H(+). It catalyses the reaction taurochenodeoxycholate 3-sulfate(in) + ATP + H2O = taurochenodeoxycholate 3-sulfate(out) + ADP + phosphate + H(+). Its function is as follows. ATP-dependent transporter of the ATP-binding cassette (ABC) family that binds and hydrolyzes ATP to enable active transport of various substrates including many drugs, toxicants and endogenous compound across cell membranes. Transports glucuronide conjugates such as bilirubin diglucuronide, estradiol-17-beta-o-glucuronide and GSH conjugates such as leukotriene C4 (LTC4). Transports also various bile salts (taurocholate, glycocholate, taurochenodeoxycholate-3-sulfate, taurolithocholate- 3-sulfate). Does not contribute substantially to bile salt physiology but provides an alternative route for the export of bile acids and glucuronides from cholestatic hepatocytes. May contribute to regulate the transport of organic compounds in testes across the blood-testis-barrier. This Rattus norvegicus (Rat) protein is ATP-binding cassette sub-family C member 3 (Abcc3).